We begin with the raw amino-acid sequence, 317 residues long: Protein IMPACT-B (317 aa).

The region spanning 17–118 (EEIEALSSIY…EKIREFLTEK (102 aa)) is the RWD domain. Positions 296–317 (DSTEETSKAGGKSKKPKSKKTK) are disordered. The span at 306-317 (GKSKKPKSKKTK) shows a compositional bias: basic residues.

Belongs to the IMPACT family. In terms of assembly, interacts with GCN1; prevents the interaction of GCN1 with EIF2AK4/GCN2 and inhibits EIF2AK4/GCN2 kinase activity. Interaction with RPL39; this interaction occurs in a GCN1-independent manner. Associates with ribosomes; this interaction occurs in a GCN1-independent manner. Associates with actin; this interaction occurs in a GCN1-independent manner.

It localises to the cytoplasm. Its function is as follows. Translational regulator that ensures constant high levels of translation upon a variety of stress conditions, such as amino acid starvation, UV-C irradiation, proteasome inhibitor treatment and glucose deprivation. Plays a role as a negative regulator of the EIF2AK4/GCN2 kinase activity; impairs GCN1-mediated EIF2AK4/GCN2 activation, and hence EIF2AK4/GCN2-mediated eIF-2-alpha phosphorylation and subsequent down-regulation of protein synthesis. Plays a role in differentiation of neuronal cells by stimulating neurite outgrowth. The sequence is that of Protein IMPACT-B (impact-B) from Xenopus tropicalis (Western clawed frog).